Reading from the N-terminus, the 403-residue chain is Phosphoglycerate kinase (403 aa).

Residues 21-23, arginine 36, 59-62, arginine 119, and arginine 154 contribute to the substrate site; these read DFN and HLGR. ATP-binding positions include lysine 207, glycine 299, glutamate 330, and 357–360; that span reads GGDA.

The protein belongs to the phosphoglycerate kinase family. In terms of assembly, monomer.

The protein localises to the cytoplasm. The catalysed reaction is (2R)-3-phosphoglycerate + ATP = (2R)-3-phospho-glyceroyl phosphate + ADP. Its pathway is carbohydrate degradation; glycolysis; pyruvate from D-glyceraldehyde 3-phosphate: step 2/5. This is Phosphoglycerate kinase from Chlamydia abortus (strain DSM 27085 / S26/3) (Chlamydophila abortus).